The following is a 236-amino-acid chain: Biosynthetic peptidoglycan transglycosylase (236 aa).

A helical transmembrane segment spans residues 12-31; sequence ALLWFAAGSIAVVLVLRWVP.

It belongs to the glycosyltransferase 51 family.

It localises to the cell inner membrane. It carries out the reaction [GlcNAc-(1-&gt;4)-Mur2Ac(oyl-L-Ala-gamma-D-Glu-L-Lys-D-Ala-D-Ala)](n)-di-trans,octa-cis-undecaprenyl diphosphate + beta-D-GlcNAc-(1-&gt;4)-Mur2Ac(oyl-L-Ala-gamma-D-Glu-L-Lys-D-Ala-D-Ala)-di-trans,octa-cis-undecaprenyl diphosphate = [GlcNAc-(1-&gt;4)-Mur2Ac(oyl-L-Ala-gamma-D-Glu-L-Lys-D-Ala-D-Ala)](n+1)-di-trans,octa-cis-undecaprenyl diphosphate + di-trans,octa-cis-undecaprenyl diphosphate + H(+). It functions in the pathway cell wall biogenesis; peptidoglycan biosynthesis. Its function is as follows. Peptidoglycan polymerase that catalyzes glycan chain elongation from lipid-linked precursors. In Pseudomonas entomophila (strain L48), this protein is Biosynthetic peptidoglycan transglycosylase.